Here is a 322-residue protein sequence, read N- to C-terminus: MQIGPYQLKNQLIVAPMAGVTDQAFRNLCLRYGAALAVSEMLSSNPEVWDTDKSRQRMTHSGEEGIRSVQIAGADPELMAQAAQFNVEQGAHIIDINMGCPAKKVNKKLAGSALMQNPPLVKDILQAVVAAVDVPVTLKIRTGWEPEHRNGVQIAQIAEDCGIASLAVHGRTRQCMYKGNAEYDTIKAIKQNVSIPVVANGDIDSPEKARFVLDYTGVDALMIGRGAQGRPWIFREIQHYLETGNKLAPIEVAEQRQVMLEHLTKLYDLYGEYKGIRFARKHIGWYLDQEDQRQFRADFNQLETAAEQYSLVEYYFDELVQN.

FMN contacts are provided by residues 16-18 (PMA) and Gln70. Cys100 (proton donor) is an active-site residue. FMN-binding positions include Lys139, 200 to 202 (NGD), and 224 to 225 (GR).

The protein belongs to the Dus family. DusB subfamily. FMN serves as cofactor.

It catalyses the reaction a 5,6-dihydrouridine in tRNA + NAD(+) = a uridine in tRNA + NADH + H(+). The enzyme catalyses a 5,6-dihydrouridine in tRNA + NADP(+) = a uridine in tRNA + NADPH + H(+). Catalyzes the synthesis of 5,6-dihydrouridine (D), a modified base found in the D-loop of most tRNAs, via the reduction of the C5-C6 double bond in target uridines. This is tRNA-dihydrouridine synthase B from Shewanella oneidensis (strain ATCC 700550 / JCM 31522 / CIP 106686 / LMG 19005 / NCIMB 14063 / MR-1).